The chain runs to 460 residues: MSTTEFPTTTKRLMGWGRTAPTVASVLSTSDPEVIVRAVTRAAEEGGRGVIARGLGRSYGDNAQNGGGLVIDMPALNRIHSIDSGTRLVDVDAGVSLDQLMKAALPHGLWVPVLPGTRQVTVGGAIGCDIHGKNHHSAGSFGNHVRSMELLTANGEVRHLTPAGPDSDLFWATVGGNGLTGIILRATIEMTPTETAYFIADGDVTGSLDETIAFHSDGSEANYTYSSAWFDAISKPPKLGRAAISRGSLAKLDQLPSKLQKDPLKFDAPQLLTLPDIFPNGLANKFTFMPIGELWYRKSGTYRNKVQNLTQFYHPLDMFGEWNRAYGSAGFLQYQFVVPTEAVEEFKSIIVDIQRSGHYSFLNVFKLFGPGNQAPLSFPIPGWNVCVDFPIKAGLHEFVTELDRRVLEFGGRLYTAKDSRTTAETFHAMYPRIDEWIRIRRSVDPDGVFASDMARRLQLL.

An FAD-binding PCMH-type domain is found at 19-193; sequence TAPTVASVLS…LRATIEMTPT (175 aa). Residues 52-62, G116, 121-124, 128-131, I183, and Y414 each bind FAD; these read ARGLGRSYGDN, TVGG, and CDIH.

This sequence belongs to the DprE1 family. In terms of assembly, monomer. Interacts with DprE2 to form an epimerase complex.

The protein localises to the periplasm. The catalysed reaction is trans,octa-cis-decaprenylphospho-beta-D-ribofuranose + FAD + H(+) = trans,octa-cis-decaprenylphospho-beta-D-erythro-pentofuranosid-2-ulose + FADH2. The protein operates within cell wall biogenesis; cell wall polysaccharide biosynthesis. Its activity is regulated as follows. Is inhibited by 8-nitro-benzothiazinones (BTZs) such as BTZ043; BTZs are a new class of antimycobacterial agents that block formation of both cell-wall lipoarabinomannan and arabinogalactan via inhibition of decaprenyl-phospho-arabinose (DPA) synthesis. BTZs are suicide inhibitors that act via covalent modification of DprE1; the essential nitro group of these compounds is reduced by DprE1 to a nitroso group, which then specifically reacts with Cys-386 of DprE1 to form an irreversible semimercaptal adduct. Other compounds with diverse scaffolds (dinitrobenzamides and nitrobenzoquinoxalines) also act as covalent DprE1 inhibitors. Functionally, component of the DprE1-DprE2 complex that catalyzes the 2-step epimerization of decaprenyl-phospho-ribose (DPR) to decaprenyl-phospho-arabinose (DPA), a key precursor that serves as the arabinose donor required for the synthesis of cell-wall arabinans. DprE1 catalyzes the first step of epimerization, namely FAD-dependent oxidation of the C2' hydroxyl of DPR to yield the keto intermediate decaprenyl-phospho-2'-keto-D-arabinose (DPX). The intermediate DPX is then transferred to DprE2 subunit of the epimerase complex, most probably through a 'substrate channel' at the interface of DprE1-DprE2 complex. Can also use farnesyl-phosphoryl-beta-D-ribofuranose (FPR) as substrate in vitro. Appears to be essential for the growth of M.smegmatis. The chain is Decaprenylphosphoryl-beta-D-ribose oxidase from Mycolicibacterium smegmatis (strain ATCC 700084 / mc(2)155) (Mycobacterium smegmatis).